Consider the following 178-residue polypeptide: Oligoribonuclease (178 aa).

The region spanning 7–168 is the Exonuclease domain; it reads LIWIDLEMTG…DDIRESIAEL (162 aa). The active site involves Y128.

The protein belongs to the oligoribonuclease family.

It is found in the cytoplasm. In terms of biological role, 3'-to-5' exoribonuclease specific for small oligoribonucleotides. This chain is Oligoribonuclease, found in Pseudomonas savastanoi pv. phaseolicola (strain 1448A / Race 6) (Pseudomonas syringae pv. phaseolicola (strain 1448A / Race 6)).